A 347-amino-acid chain; its full sequence is D-alanine--D-alanine ligase (347 aa).

One can recognise an ATP-grasp domain in the interval 131 to 333; it reads KRVLESAGIA…YPELIERLVD (203 aa). Residue 161–216 coordinates ATP; sequence EEKLAYPVFTKPSNMGSSVGISKSENQEELRPALELAFRYDSRVLVEQGVNAREIE. The Mg(2+) site is built by Asp-287, Glu-300, and Asn-302.

The protein belongs to the D-alanine--D-alanine ligase family. Mg(2+) serves as cofactor. The cofactor is Mn(2+).

Its subcellular location is the cytoplasm. The enzyme catalyses 2 D-alanine + ATP = D-alanyl-D-alanine + ADP + phosphate + H(+). It participates in cell wall biogenesis; peptidoglycan biosynthesis. Cell wall formation. This is D-alanine--D-alanine ligase from Streptococcus pneumoniae (strain Taiwan19F-14).